The chain runs to 283 residues: Formamidopyrimidine-DNA glycosylase (283 aa).

Pro-2 (schiff-base intermediate with DNA) is an active-site residue. Catalysis depends on Glu-3, which acts as the Proton donor. Lys-61 acts as the Proton donor; for beta-elimination activity in catalysis. DNA is bound by residues His-94, Arg-113, and Lys-159. Residues 245–279 (DAYGREGESCRRCGAVMRREKFMNRSSFYCPKCQP) form an FPG-type zinc finger. Residue Arg-269 is the Proton donor; for delta-elimination activity of the active site.

This sequence belongs to the FPG family. In terms of assembly, monomer. Zn(2+) serves as cofactor.

The catalysed reaction is Hydrolysis of DNA containing ring-opened 7-methylguanine residues, releasing 2,6-diamino-4-hydroxy-5-(N-methyl)formamidopyrimidine.. The enzyme catalyses 2'-deoxyribonucleotide-(2'-deoxyribose 5'-phosphate)-2'-deoxyribonucleotide-DNA = a 3'-end 2'-deoxyribonucleotide-(2,3-dehydro-2,3-deoxyribose 5'-phosphate)-DNA + a 5'-end 5'-phospho-2'-deoxyribonucleoside-DNA + H(+). Involved in base excision repair of DNA damaged by oxidation or by mutagenic agents. Acts as a DNA glycosylase that recognizes and removes damaged bases. Has a preference for oxidized purines, such as 7,8-dihydro-8-oxoguanine (8-oxoG). Has AP (apurinic/apyrimidinic) lyase activity and introduces nicks in the DNA strand. Cleaves the DNA backbone by beta-delta elimination to generate a single-strand break at the site of the removed base with both 3'- and 5'-phosphates. This Mycolicibacterium paratuberculosis (strain ATCC BAA-968 / K-10) (Mycobacterium paratuberculosis) protein is Formamidopyrimidine-DNA glycosylase.